The chain runs to 63 residues: SERF-like protein C1705.02 (63 aa).

Residues 1 to 13 (MSRGNQRDVDRAR) are compositionally biased toward basic and acidic residues. The disordered stretch occupies residues 1 to 63 (MSRGNQRDVD…EANGGSKGKK (63 aa)). The segment covering 14 to 24 (NLKKSQASKKK) has biased composition (basic residues). Basic and acidic residues predominate over residues 25–35 (QAGDPTKRLEA).

This sequence belongs to the SERF family.

The protein localises to the cytoplasm. The protein resides in the nucleus. It is found in the nucleolus. This Schizosaccharomyces pombe (strain 972 / ATCC 24843) (Fission yeast) protein is SERF-like protein C1705.02.